The primary structure comprises 1456 residues: Sterol 3-beta-glucosyltransferase (1456 aa).

Residues 60–70 (ESDEEDGDEVE) show a composition bias toward acidic residues. 2 disordered regions span residues 60 to 113 (ESDE…SISH) and 128 to 156 (LSPHSLCHTSSHEASRRGSAEQPSRTQSE). Low complexity predominate over residues 71–104 (TPSTTTTAVSPSATMSAPSPTATAPTPHSGTHTP). Residues 137–146 (SSHEASRRGS) are compositionally biased toward basic and acidic residues. Positions 200 to 247 (QKLKGFAALDVDEQLIADYPVWLLKNVLIQGHLYITAKHMCFLSYLPR) constitute a GRAM 1 domain. The 101-residue stretch at 251–351 (ANIRSGTLVK…WVKALQKEIF (101 aa)) folds into the PH domain. 2 disordered regions span residues 462–512 (HSAH…PRLP) and 524–776 (DKCD…QDTF). Basic and acidic residues predominate over residues 496–508 (QPHERDEKRDSKL). Residues 556–567 (LASQRTSSSTLF) show a composition bias toward polar residues. Composition is skewed to low complexity over residues 576–606 (SQPTTPGVHAPGSSTPGGSYGTTTPGTPASA) and 647–676 (GGATSSGAATGATTPGGAAAPGSTGNSSPG). Residues 677–696 (TPGGLGGPGAVGAGGPGVMG) show a composition bias toward gly residues. Positions 719-735 (APHDPAAAAAAADAAAP) are enriched in low complexity. The GRAM 2 domain maps to 827-893 (ERFQKRFALG…KVVENATKDS (67 aa)). Residues S1004, R1005, D1007, N1279, N1307, H1310, H1323, S1326, G1327, T1328, D1347, and Q1348 each contribute to the UDP-alpha-D-glucose site.

The protein belongs to the glycosyltransferase 28 family.

It localises to the cytoplasm. It is found in the membrane. It carries out the reaction a sterol + UDP-alpha-D-glucose = a sterol 3-beta-D-glucoside + UDP + H(+). The catalysed reaction is ergosterol + UDP-alpha-D-glucose = ergosteryl 3-beta-D-glucoside + UDP + H(+). Functionally, sterol glycosyltransferase responsible for the glycosylation of ergosterol to form ergosterol-glucoside. The sequence is that of Sterol 3-beta-glucosyltransferase from Yarrowia lipolytica (strain CLIB 122 / E 150) (Yeast).